The following is a 426-amino-acid chain: Zinc finger CCCH domain-containing protein 13 (426 aa).

The C3H1-type zinc finger occupies 10–36; it reads AYKTKLCALWQRGNCNRDTCSFAHGHG. Disordered regions lie at residues 34 to 155, 253 to 317, and 390 to 426; these read GHGD…HEKQ, NEEG…DKTS, and NDAD…VDVE. Composition is skewed to basic and acidic residues over residues 54–70, 78–101, and 108–120; these read RRDY…DRRF, PGRE…RDSS, and RKSE…KTDD. Over residues 124–133 the composition is skewed to low complexity; that stretch reads NSSRSLSLSD. Residues 135–155 are compositionally biased toward basic and acidic residues; that stretch reads NDEKKKDKFSSGDEKEDHEKQ. Residues 144–245 adopt a coiled-coil conformation; sequence SSGDEKEDHE…FERLGDLLAS (102 aa). Positions 255–272 are enriched in polar residues; it reads EGSSVNEDLNERSPNTAA. Positions 284 to 317 are enriched in basic and acidic residues; the sequence is EEAKAVKKRRERDSDTMTRSDKYRSDVTDFDKTS. Residues 416–426 show a composition bias toward acidic residues; it reads YEGDDEEVDVE.

This chain is Zinc finger CCCH domain-containing protein 13, found in Oryza sativa subsp. japonica (Rice).